Consider the following 170-residue polypeptide: MSSSSYRDSYFQYRHLPAPHHILYAEWNQDILALPDEVANITMAMKDNTRTDAEEGRAPQDGERNSNVRESAQGKALMTSEQNSNRYWNSFHDEDDWNLFNGMELESNGVVTFAGQAFDHSLNGGTNSRNDGANEPRKETITGSIFDRRITQLAYARNNGWHELALPQSR.

Basic and acidic residues-rich tracts occupy residues N48–N67 and G132–I141. Disordered stretches follow at residues N48–E81 and L122–I141.

This sequence belongs to the APC13 family. As to quaternary structure, the APC/C is composed of at least 13 subunits that stay tightly associated throughout the cell cycle: APC1, APC2, APC4, APC5, APC9, APC11, CDC16, CDC23, CDC26, CDC27, DOC1, MND2 and SWM1. SWM1 interacts directly with CDC23 and APC5, and is required to tether APC9, CDC16, CDC26 and CDC27 to the complex.

The protein operates within protein modification; protein ubiquitination. In terms of biological role, component of the anaphase promoting complex/cyclosome (APC/C), a cell cycle-regulated E3 ubiquitin-protein ligase complex that controls progression through mitosis and the G1 phase of the cell cycle. The APC/C is thought to confer substrate specificity and, in the presence of ubiquitin-conjugating E2 enzymes, it catalyzes the formation of protein-ubiquitin conjugates that are subsequently degraded by the 26S proteasome. In early mitosis, the APC/C is activated by CDC20 and targets securin PDS1, the B-type cyclin CLB5, and other anaphase inhibitory proteins for proteolysis, thereby triggering the separation of sister chromatids at the metaphase-to-anaphase transition. In late mitosis and in G1, degradation of CLB5 allows activation of the APC/C by CDH1, which is needed to destroy CDC20 and the B-type cyclin CLB2 to allow exit from mitosis and creating the low CDK state necessary for cytokinesis and for reforming prereplicative complexes in G1 prior to another round of replication. SWM1 is required for APC/C activity in meiosis. The polypeptide is Anaphase-promoting complex subunit SWM1 (SWM1) (Saccharomyces cerevisiae (strain ATCC 204508 / S288c) (Baker's yeast)).